The sequence spans 141 residues: Large ribosomal subunit protein uL11 (141 aa).

This sequence belongs to the universal ribosomal protein uL11 family. Part of the ribosomal stalk of the 50S ribosomal subunit. Interacts with L10 and the large rRNA to form the base of the stalk. L10 forms an elongated spine to which L12 dimers bind in a sequential fashion forming a multimeric L10(L12)X complex. One or more lysine residues are methylated.

Forms part of the ribosomal stalk which helps the ribosome interact with GTP-bound translation factors. The protein is Large ribosomal subunit protein uL11 of Picosynechococcus sp. (strain ATCC 27264 / PCC 7002 / PR-6) (Agmenellum quadruplicatum).